The primary structure comprises 205 residues: Dephospho-CoA kinase (205 aa).

Residues 7-205 enclose the DPCK domain; that stretch reads IIGVTGRIAS…QGIINYERFE (199 aa). Residue 15 to 20 coordinates ATP; that stretch reads ASGKDT.

Belongs to the CoaE family.

It is found in the cytoplasm. It carries out the reaction 3'-dephospho-CoA + ATP = ADP + CoA + H(+). The protein operates within cofactor biosynthesis; coenzyme A biosynthesis; CoA from (R)-pantothenate: step 5/5. Functionally, catalyzes the phosphorylation of the 3'-hydroxyl group of dephosphocoenzyme A to form coenzyme A. This chain is Dephospho-CoA kinase, found in Borreliella burgdorferi (strain ATCC 35210 / DSM 4680 / CIP 102532 / B31) (Borrelia burgdorferi).